The following is a 701-amino-acid chain: Polyribonucleotide nucleotidyltransferase (701 aa).

Mg(2+)-binding residues include D485 and D491. The KH domain maps to P552–I611. An S1 motif domain is found at G621–K689.

Belongs to the polyribonucleotide nucleotidyltransferase family. Mg(2+) is required as a cofactor.

It localises to the cytoplasm. The catalysed reaction is RNA(n+1) + phosphate = RNA(n) + a ribonucleoside 5'-diphosphate. Its function is as follows. Involved in mRNA degradation. Catalyzes the phosphorolysis of single-stranded polyribonucleotides processively in the 3'- to 5'-direction. This is Polyribonucleotide nucleotidyltransferase from Nitrosospira multiformis (strain ATCC 25196 / NCIMB 11849 / C 71).